The following is a 190-amino-acid chain: RNA-binding protein OPG065 (190 aa).

Positions 5–70 (YIDERSDAEI…DIPPRWFMTT (66 aa)) constitute a Z-binding domain. Positions 117 to 184 (NPVTIINEYC…AKLAVDKLLG (68 aa)) constitute a DRBM domain.

Belongs to the orthopoxvirus OPG065 family. Interacts with host G1P2/ISG15. Interacts with host EIF2AK2/PKR. Interacts with host ZBP1.

In terms of biological role, RNA-binding protein that plays a role in the inhibition of multiple cellular antiviral responses activated by double-stranded RNA (dsRNA), such as inhibition of PKR activation, necroptosis, and IFN-mediated antiviral activities. Recognizes and binds Z-RNA structures via its Z-binding domain and dsRNA via its DRBM domain: RNA-binding activity is required to escape host ZBP1-dependent necroptosis. Mechanistically, the Z-binding domain binds Z-RNAs that are produced during vaccinia virus infection, thereby competing with Z-RNA detection by host ZBP1, suppressing ZBP1-dependent necroptosis. Acts as a key inhibitor of the interferon response by blocking the phosphorylation and subsequent activation of IRF3 and IRF7 kinases that are required for interferon-alpha gene expression. Inhibits NF-kappa-B activation and the ubiquitin-like protein ISG15, which is an early antiviral protein. The binding with host ISG15 subsequently blocks host ISGylation. The protein is RNA-binding protein OPG065 (OPG065) of Homo sapiens (Human).